A 245-amino-acid polypeptide reads, in one-letter code: Membrane-associated progesterone-binding protein 4 (245 aa).

Residues 6–26 traverse the membrane as a helical segment; that stretch reads RFLLSPFVGVTFIVVLVSLYF. In terms of domain architecture, Cytochrome b5 heme-binding spans 39 to 138; that stretch reads KRLFSAEELA…RTYTPVGKLV (100 aa). Positions 45 to 138 are steroid-binding; that stretch reads EELALYNGTD…RTYTPVGKLV (94 aa).

It belongs to the cytochrome b5 family. MAPR subfamily.

The protein resides in the membrane. This is Membrane-associated progesterone-binding protein 4 from Arabidopsis thaliana (Mouse-ear cress).